We begin with the raw amino-acid sequence, 89 residues long: uncharacterized protein (89 aa).

A run of 3 helical transmembrane segments spans residues 5–25 (AYLV…KRKA), 36–56 (RLWL…MQTF), and 67–87 (YGVP…YSPF).

It localises to the cell membrane. This is an uncharacterized protein from Bacillus subtilis (strain 168).